The sequence spans 426 residues: Serine--tRNA ligase (426 aa).

Residues 37–63 form a disordered region; that stretch reads RKSVQTRTEQLQAERNARSKSIGQAKA. 233 to 235 is a binding site for L-serine; it reads TAE. 264 to 266 lines the ATP pocket; sequence RSE. Glutamate 287 contacts L-serine. An ATP-binding site is contributed by 351-354; sequence EISS. Serine 387 lines the L-serine pocket.

This sequence belongs to the class-II aminoacyl-tRNA synthetase family. Type-1 seryl-tRNA synthetase subfamily. As to quaternary structure, homodimer. The tRNA molecule binds across the dimer.

Its subcellular location is the cytoplasm. The enzyme catalyses tRNA(Ser) + L-serine + ATP = L-seryl-tRNA(Ser) + AMP + diphosphate + H(+). The catalysed reaction is tRNA(Sec) + L-serine + ATP = L-seryl-tRNA(Sec) + AMP + diphosphate + H(+). Its pathway is aminoacyl-tRNA biosynthesis; selenocysteinyl-tRNA(Sec) biosynthesis; L-seryl-tRNA(Sec) from L-serine and tRNA(Sec): step 1/1. In terms of biological role, catalyzes the attachment of serine to tRNA(Ser). Is also able to aminoacylate tRNA(Sec) with serine, to form the misacylated tRNA L-seryl-tRNA(Sec), which will be further converted into selenocysteinyl-tRNA(Sec). In Pseudomonas entomophila (strain L48), this protein is Serine--tRNA ligase.